Reading from the N-terminus, the 306-residue chain is D-alanine--D-alanine ligase (306 aa).

In terms of domain architecture, ATP-grasp spans K102–E300. ATP is bound at residue P128 to T183. The Mg(2+) site is built by D253, E267, and N269.

It belongs to the D-alanine--D-alanine ligase family. The cofactor is Mg(2+). It depends on Mn(2+) as a cofactor.

It is found in the cytoplasm. The enzyme catalyses 2 D-alanine + ATP = D-alanyl-D-alanine + ADP + phosphate + H(+). It participates in cell wall biogenesis; peptidoglycan biosynthesis. Functionally, cell wall formation. The chain is D-alanine--D-alanine ligase from Bartonella bacilliformis (strain ATCC 35685 / KC583 / Herrer 020/F12,63).